The primary structure comprises 485 residues: Glutamyl-tRNA(Gln) amidotransferase subunit A (485 aa).

Catalysis depends on charge relay system residues Lys76 and Ser151. The active-site Acyl-ester intermediate is Ser175.

Belongs to the amidase family. GatA subfamily. As to quaternary structure, heterotrimer of A, B and C subunits.

The catalysed reaction is L-glutamyl-tRNA(Gln) + L-glutamine + ATP + H2O = L-glutaminyl-tRNA(Gln) + L-glutamate + ADP + phosphate + H(+). In terms of biological role, allows the formation of correctly charged Gln-tRNA(Gln) through the transamidation of misacylated Glu-tRNA(Gln) in organisms which lack glutaminyl-tRNA synthetase. The reaction takes place in the presence of glutamine and ATP through an activated gamma-phospho-Glu-tRNA(Gln). In Pelagibacter ubique (strain HTCC1062), this protein is Glutamyl-tRNA(Gln) amidotransferase subunit A.